The primary structure comprises 417 residues: Serine hydroxymethyltransferase (417 aa).

(6S)-5,6,7,8-tetrahydrofolate contacts are provided by residues leucine 121 and 125-127; that span reads GHL. Lysine 229 carries the N6-(pyridoxal phosphate)lysine modification. 355 to 357 is a binding site for (6S)-5,6,7,8-tetrahydrofolate; the sequence is SPF.

It belongs to the SHMT family. Homodimer. Pyridoxal 5'-phosphate is required as a cofactor.

The protein localises to the cytoplasm. It catalyses the reaction (6R)-5,10-methylene-5,6,7,8-tetrahydrofolate + glycine + H2O = (6S)-5,6,7,8-tetrahydrofolate + L-serine. Its pathway is one-carbon metabolism; tetrahydrofolate interconversion. It participates in amino-acid biosynthesis; glycine biosynthesis; glycine from L-serine: step 1/1. In terms of biological role, catalyzes the reversible interconversion of serine and glycine with tetrahydrofolate (THF) serving as the one-carbon carrier. This reaction serves as the major source of one-carbon groups required for the biosynthesis of purines, thymidylate, methionine, and other important biomolecules. Also exhibits THF-independent aldolase activity toward beta-hydroxyamino acids, producing glycine and aldehydes, via a retro-aldol mechanism. This chain is Serine hydroxymethyltransferase, found in Tolumonas auensis (strain DSM 9187 / NBRC 110442 / TA 4).